The chain runs to 97 residues: DNA/RNA-binding protein Alba 1 (97 aa).

Serine 2 is subject to N-acetylserine; by ard1 acetylase. Lysine 16, lysine 17, and tyrosine 22 together coordinate RNA. Residue lysine 16 is modified to N6,N6,N6-trimethyllysine; alternate. An N6,N6-dimethyllysine; alternate modification is found at lysine 16. Lysine 16 carries the post-translational modification N6-acetyllysine; alternate. At lysine 16 the chain carries N6-methyllysine; alternate. Residue asparagine 31 is modified to Deamidated asparagine; partial. The residue at position 32 (glutamine 32) is a Deamidated glutamine; partial. An N6-methyllysine; partial modification is found at lysine 40. RNA is bound by residues arginine 42 and arginine 44. Lysine 48 carries the post-translational modification N6-acetyllysine; partial. The residue at position 51 (aspartate 51) is an Aspartate methyl ester; partial. A Deamidated asparagine; partial modification is found at asparagine 58. Lysine 64 is subject to N6-acetyllysine; alternate; partial. Lysine 64 carries the post-translational modification N6-methyllysine; alternate; partial. N6-acetyllysine; partial is present on lysine 68. The residue at position 75 (glutamine 75) is an N5-methylglutamine; partial. At aspartate 81 the chain carries Aspartate methyl ester; partial. Position 97 is an N6-methyllysine; partial (lysine 97).

Belongs to the histone-like Alba family. In terms of assembly, forms homodimers and higher order oligomers, e.g. homotetramers. Acetylated. Acetylation at Lys-16 by the Pat acetylase decreases DNA-binding affinity. Deacetylation at Lys-16 by the CobB deacetylase increases DNA-binding affinity. Acetylation at Ser-2 is involved in the regulation of the turnover of the protein.

It localises to the cytoplasm. Its subcellular location is the chromosome. Binds double-stranded DNA tightly but without sequence specificity. Involved in DNA compaction. Possesses DNA endonuclease activity. Prevents transcription after DNA binding. Binds single-stranded DNA and RNA in vitro. Binds rRNA and mRNA in vivo. May play a role in maintaining the structural and functional stability of RNA, and, perhaps, ribosomes. Binds double-stranded RNA (dsRNA) and exhibits RNA chaperone activity. Required for normal growth. The chain is DNA/RNA-binding protein Alba 1 from Saccharolobus islandicus (strain REY15A) (Sulfolobus islandicus).